Consider the following 489-residue polypeptide: Glycogen synthase (489 aa).

Residue lysine 18 coordinates ADP-alpha-D-glucose.

This sequence belongs to the glycosyltransferase 1 family. Bacterial/plant glycogen synthase subfamily.

The catalysed reaction is [(1-&gt;4)-alpha-D-glucosyl](n) + ADP-alpha-D-glucose = [(1-&gt;4)-alpha-D-glucosyl](n+1) + ADP + H(+). It functions in the pathway glycan biosynthesis; glycogen biosynthesis. Functionally, synthesizes alpha-1,4-glucan chains using ADP-glucose. The protein is Glycogen synthase of Rhodopseudomonas palustris (strain BisA53).